We begin with the raw amino-acid sequence, 490 residues long: Betaine aldehyde dehydrogenase (490 aa).

The K(+) site is built by I27 and D93. 150-152 (GAW) is an NAD(+) binding site. The active-site Charge relay system is K162. 176–179 (KPSE) provides a ligand contact to NAD(+). V180 is a binding site for K(+). 230-233 (GTTT) contributes to the NAD(+) binding site. L246 is a binding site for K(+). E252 functions as the Proton acceptor in the catalytic mechanism. Residues G254, C286, and E387 each contribute to the NAD(+) site. C286 functions as the Nucleophile in the catalytic mechanism. At C286 the chain carries Cysteine sulfenic acid (-SOH). Positions 457 and 460 each coordinate K(+). Residue E464 is the Charge relay system of the active site.

Belongs to the aldehyde dehydrogenase family. In terms of assembly, dimer of dimers. Requires K(+) as cofactor.

The enzyme catalyses betaine aldehyde + NAD(+) + H2O = glycine betaine + NADH + 2 H(+). It functions in the pathway amine and polyamine biosynthesis; betaine biosynthesis via choline pathway; betaine from betaine aldehyde: step 1/1. Involved in the biosynthesis of the osmoprotectant glycine betaine. Catalyzes the irreversible oxidation of betaine aldehyde to the corresponding acid. The chain is Betaine aldehyde dehydrogenase from Pseudomonas entomophila (strain L48).